Here is a 221-residue protein sequence, read N- to C-terminus: Adenylate kinase (221 aa).

10-15 contacts ATP; the sequence is GAGKGT. Positions 30-59 are NMP; the sequence is STGDMLRAAVKAGTPLGLEAKRFMDAGELV. AMP-binding positions include threonine 31, arginine 36, 57–59, 85–88, and glutamine 92; these read ELV and GFPR. An LID region spans residues 122-159; the sequence is GRRSHAASGRTYHVKFNPPKVEGLDDVTGEPLIQRDDD. Residues arginine 123 and 132-133 each bind ATP; that span reads TY. The AMP site is built by arginine 156 and arginine 167. Glycine 207 is a binding site for ATP.

It belongs to the adenylate kinase family. Monomer.

Its subcellular location is the cytoplasm. It catalyses the reaction AMP + ATP = 2 ADP. Its pathway is purine metabolism; AMP biosynthesis via salvage pathway; AMP from ADP: step 1/1. Functionally, catalyzes the reversible transfer of the terminal phosphate group between ATP and AMP. Plays an important role in cellular energy homeostasis and in adenine nucleotide metabolism. The polypeptide is Adenylate kinase (Paraburkholderia xenovorans (strain LB400)).